The chain runs to 372 residues: Trihelix transcription factor GT-4 (372 aa).

One can recognise a Myb-like domain in the interval 47–111 (APKKRAETWA…MCTDKWRNIL (65 aa)). S167 is subject to Phosphoserine.

It localises to the nucleus. Probable transcription factor that binds specific DNA sequence. The sequence is that of Trihelix transcription factor GT-4 (GT-4) from Arabidopsis thaliana (Mouse-ear cress).